Consider the following 132-residue polypeptide: uncharacterized protein (132 aa).

Disordered regions lie at residues G36 to S69 and Q97 to R132. S101 is subject to Phosphoserine.

In terms of assembly, copurifies with proteins HOL1, MMP1, PEX7 and PLB1.

This is an uncharacterized protein from Saccharomyces cerevisiae (strain ATCC 204508 / S288c) (Baker's yeast).